A 383-amino-acid polypeptide reads, in one-letter code: Succinyl-diaminopimelate desuccinylase (383 aa).

A Zn(2+)-binding site is contributed by His-79. Asp-81 is a catalytic residue. Residue Asp-110 coordinates Zn(2+). The Proton acceptor role is filled by Glu-141. 3 residues coordinate Zn(2+): Glu-142, Glu-170, and His-355.

It belongs to the peptidase M20A family. DapE subfamily. In terms of assembly, homodimer. Zn(2+) serves as cofactor. The cofactor is Co(2+).

The enzyme catalyses N-succinyl-(2S,6S)-2,6-diaminopimelate + H2O = (2S,6S)-2,6-diaminopimelate + succinate. Its pathway is amino-acid biosynthesis; L-lysine biosynthesis via DAP pathway; LL-2,6-diaminopimelate from (S)-tetrahydrodipicolinate (succinylase route): step 3/3. In terms of biological role, catalyzes the hydrolysis of N-succinyl-L,L-diaminopimelic acid (SDAP), forming succinate and LL-2,6-diaminopimelate (DAP), an intermediate involved in the bacterial biosynthesis of lysine and meso-diaminopimelic acid, an essential component of bacterial cell walls. The sequence is that of Succinyl-diaminopimelate desuccinylase from Helicobacter pylori (strain P12).